The sequence spans 380 residues: Glutamate 5-kinase (380 aa).

Lys-15 lines the ATP pocket. 3 residues coordinate substrate: Ser-59, Asp-146, and Asn-158. 178–179 (TD) serves as a coordination point for ATP. Residues 285–363 (RGSVTVDAGA…AEFERLLGYA (79 aa)) form the PUA domain.

The protein belongs to the glutamate 5-kinase family.

It localises to the cytoplasm. It catalyses the reaction L-glutamate + ATP = L-glutamyl 5-phosphate + ADP. It functions in the pathway amino-acid biosynthesis; L-proline biosynthesis; L-glutamate 5-semialdehyde from L-glutamate: step 1/2. Catalyzes the transfer of a phosphate group to glutamate to form L-glutamate 5-phosphate. The polypeptide is Glutamate 5-kinase (Acidovorax ebreus (strain TPSY) (Diaphorobacter sp. (strain TPSY))).